We begin with the raw amino-acid sequence, 133 residues long: Profilin-2 (133 aa).

A disulfide bond links Cys-13 and Cys-117. The Involved in PIP2 interaction motif lies at 83–99 (AVIRGKKGSGGITIKKT). The residue at position 113 (Thr-113) is a Phosphothreonine.

It belongs to the profilin family. In terms of assembly, occurs in many kinds of cells as a complex with monomeric actin in a 1:1 ratio. Phosphorylated by MAP kinases.

It is found in the cytoplasm. It localises to the cytoskeleton. In terms of biological role, binds to actin and affects the structure of the cytoskeleton. At high concentrations, profilin prevents the polymerization of actin, whereas it enhances it at low concentrations. This chain is Profilin-2, found in Betula pendula (European white birch).